Reading from the N-terminus, the 217-residue chain is Protein DJ-1alpha (217 aa).

The Nucleophile role is filled by Cys-133. Cys-133 is modified (cysteine sulfinic acid (-SO2H); alternate).

In terms of tissue distribution, expressed in testis (at protein level).

The protein localises to the cytoplasm. It localises to the nucleus. Its subcellular location is the mitochondrion. In terms of biological role, plays an important role in cell protection against oxidative stress and cell death acting as oxidative stress sensor. Does not play a role in methylglyoxal detoxification. The sequence is that of Protein DJ-1alpha from Drosophila melanogaster (Fruit fly).